The following is a 146-amino-acid chain: Hemoglobin subunit beta (146 aa).

At Val1 the chain carries N-acetylvaline. Residues 2–146 (HLTAEEKAAV…VANALAHKYH (145 aa)) enclose the Globin domain. Thr12 carries the phosphothreonine modification. Residue Ser44 is modified to Phosphoserine. Lys59 is subject to N6-acetyllysine. Residue His63 coordinates heme b. At Lys82 the chain carries N6-acetyllysine. His92 is a binding site for heme b. An S-nitrosocysteine modification is found at Cys93. At Lys144 the chain carries N6-acetyllysine.

Belongs to the globin family. As to quaternary structure, heterotetramer of two alpha chains and two beta chains. As to expression, red blood cells.

Involved in oxygen transport from the lung to the various peripheral tissues. In Mellivora capensis (Ratel), this protein is Hemoglobin subunit beta (HBB).